The following is a 319-amino-acid chain: Ribosomal large subunit pseudouridine synthase C (319 aa).

One can recognise an S4 RNA-binding domain in the interval Gln20–Pro83. Asp144 is a catalytic residue.

This sequence belongs to the pseudouridine synthase RluA family.

The catalysed reaction is uridine(955/2504/2580) in 23S rRNA = pseudouridine(955/2504/2580) in 23S rRNA. Responsible for synthesis of pseudouridine from uracil at positions 955, 2504 and 2580 in 23S ribosomal RNA. This Escherichia coli (strain K12) protein is Ribosomal large subunit pseudouridine synthase C.